The primary structure comprises 405 residues: Growth/differentiation factor 11 (405 aa).

The N-terminal stretch at 1 to 20 (MVLAAPLLLGFLLLALELRP) is a signal peptide. Residues 21–296 (RGEAAEGPAA…VLENTKRSRR (276 aa)) constitute a propeptide that is removed on maturation. A glycan (N-linked (GlcNAc...) asparagine) is linked at asparagine 92. Disulfide bonds link cysteine 302–cysteine 312, cysteine 311–cysteine 370, cysteine 339–cysteine 402, and cysteine 343–cysteine 404.

The protein belongs to the TGF-beta family. In terms of assembly, homodimer; disulfide-linked. Interacts directly with ACVR2B. Interacts directly with ACVR2A. Interacts with ACVR1B, TGFBR1 and ACVR1C in an ACVR2B-dependent manner. Interacts with FST isoform 2/FS288. In terms of processing, synthesized as large precursor molecule that undergoes proteolytic cleavage by furin-like proteases. This produces an inactive form consisting of the mature C-terminal portion non-covalently bound to its cleaved N-terminal propeptide. Activation of the mature form requires additional cleavage of the propeptide by a tolloid-like metalloproteinase. As to expression, highly expressed in the developing limb bud, initially detected in the distal mesenchyme, and later localizing to regions around the developing bones. Is also expressed in adult dental pulp and brain.

It localises to the secreted. Its function is as follows. Secreted signal that acts globally to regulate anterior/posterior axial patterning during development. May play critical roles in patterning both mesodermal and neural tissues. It is required for proper vertebral patterning and orofacial development. Signals through activin receptors type-2, ACVR2A and ACVR2B, and activin receptors type-1, ACVR1B, ACVR1C and TGFBR1 leading to the phosphorylation of SMAD2 and SMAD3. The polypeptide is Growth/differentiation factor 11 (Gdf11) (Mus musculus (Mouse)).